The sequence spans 156 residues: Putative NrdI-like protein (156 aa).

The chain is Putative NrdI-like protein from Streptococcus pneumoniae (strain ATCC BAA-255 / R6).